Consider the following 340-residue polypeptide: Glycerol-3-phosphate dehydrogenase [NAD(P)+] (340 aa).

The NADPH site is built by Ser11, Trp12, Arg33, and Lys106. Sn-glycerol 3-phosphate is bound by residues Lys106, Gly137, and Ser139. Position 141 (Ala141) interacts with NADPH. Lys192, Asp245, Ser255, Arg256, and Asn257 together coordinate sn-glycerol 3-phosphate. Residue Lys192 is the Proton acceptor of the active site. Arg256 provides a ligand contact to NADPH. Residues Val280 and Glu282 each coordinate NADPH.

Belongs to the NAD-dependent glycerol-3-phosphate dehydrogenase family.

The protein localises to the cytoplasm. The enzyme catalyses sn-glycerol 3-phosphate + NAD(+) = dihydroxyacetone phosphate + NADH + H(+). It carries out the reaction sn-glycerol 3-phosphate + NADP(+) = dihydroxyacetone phosphate + NADPH + H(+). Its pathway is membrane lipid metabolism; glycerophospholipid metabolism. In terms of biological role, catalyzes the reduction of the glycolytic intermediate dihydroxyacetone phosphate (DHAP) to sn-glycerol 3-phosphate (G3P), the key precursor for phospholipid synthesis. In Bacillus cereus (strain 03BB102), this protein is Glycerol-3-phosphate dehydrogenase [NAD(P)+].